A 219-amino-acid chain; its full sequence is Glycosylphosphatidylinositol anchor biosynthesis protein 11 (219 aa).

The Cytoplasmic segment spans residues 1–45 (MPAKKRTRKTVKKTVSFSDDTTLTTHQNREKKNVDHDRPPVYVRK). Phosphoserine is present on Ser16. Residues 46–66 (TPLMTFPYHLVALLYYYVFVS) traverse the membrane as a helical segment. Position 67 (Ser67) is a topological domain, lumenal. A helical transmembrane segment spans residues 68–88 (NFNTVKLLSFLIPTQVAYLVL). At 89–108 (QFNKCTVYGNKIIKINYSLT) the chain is on the cytoplasmic side. A helical transmembrane segment spans residues 109–129 (IICLGVTFLLSFPTMLLTILF). At 130–135 (GAPLMD) the chain is on the lumenal side. Residues 136-156 (LLWETWLLSLHFAFLAYPAVY) form a helical membrane-spanning segment. At 157–170 (SVFNCDFKVGLWKK) the chain is on the cytoplasmic side. Residues 171 to 191 (YFIFIVVGGWISCVVIPLDWD) form a helical membrane-spanning segment. Residues 192-198 (RDWQNWP) are Lumenal-facing. The helical transmembrane segment at 199–217 (IPIVVGGYLGALVGYTIGA) threads the bilayer. The Cytoplasmic segment spans residues 218–219 (YI).

This sequence belongs to the PIGF family.

The protein localises to the endoplasmic reticulum membrane. It participates in glycolipid biosynthesis; glycosylphosphatidylinositol-anchor biosynthesis. Acts in the GPI biosynthetic pathway between GlcNAc-PI synthesis and GPI transfer to protein. Required for the formation of complete GPI precursors CP1 and CP2. The protein is Glycosylphosphatidylinositol anchor biosynthesis protein 11 (GPI11) of Saccharomyces cerevisiae (strain ATCC 204508 / S288c) (Baker's yeast).